The following is a 198-amino-acid chain: Probable host range protein 2 (198 aa).

The tract at residues 171–198 is disordered; sequence SDDDDDNDNADDDEEDDDEVNDIEDDYE.

This sequence belongs to the poxviridae C7 protein family.

In terms of biological role, plays a role for multiplication of the virus in different cell types. In Bos taurus (Bovine), this protein is Probable host range protein 2.